A 252-amino-acid chain; its full sequence is tRNA pseudouridine synthase A (252 aa).

Asp54 (nucleophile) is an active-site residue. Residue Tyr113 participates in substrate binding.

This sequence belongs to the tRNA pseudouridine synthase TruA family. As to quaternary structure, homodimer.

It catalyses the reaction uridine(38/39/40) in tRNA = pseudouridine(38/39/40) in tRNA. Functionally, formation of pseudouridine at positions 38, 39 and 40 in the anticodon stem and loop of transfer RNAs. In Bacteroides fragilis (strain ATCC 25285 / DSM 2151 / CCUG 4856 / JCM 11019 / LMG 10263 / NCTC 9343 / Onslow / VPI 2553 / EN-2), this protein is tRNA pseudouridine synthase A.